The chain runs to 2547 residues: Lovastatin diketide synthase mokB (2547 aa).

The Ketosynthase family 3 (KS3) domain occupies 10–430; the sequence is PTPIAVVGMG…GANAHAIVER (421 aa). Active-site for beta-ketoacyl synthase activity residues include Cys-183, His-318, and His-353. The acyl and malonyl transferase stretch occupies residues 545–890; that stretch reads VFTGQGAQWF…MDLLQGGYPV (346 aa). Ser-635 acts as the For malonyltransferase activity in catalysis. An N-terminal hotdog fold region spans residues 941-1079; it reads HDLIGVQEPL…GLIRAQVDHP (139 aa). The PKS/mFAS DH domain occupies 941–1252; sequence HDLIGVQEPL…FQSLGAVISD (312 aa). The active-site Proton acceptor; for dehydratase activity is His-973. The interval 973-985 is dehydratase-like; the sequence is HVVGSRILFPGAG. The interval 1095-1252 is C-terminal hotdog fold; it reads SRKMAPQDLW…FQSLGAVISD (158 aa). Catalysis depends on Asp-1160, which acts as the Proton donor; for dehydratase activity. Cys-1340 and Cys-1379 form a disulfide bridge. The methyltransferase stretch occupies residues 1510-1547; that stretch reads YDVVLACQVLHATSNMQRTLNNVRKLLKPGGKLILVET. The region spanning 2459–2541 is the Carrier domain; that stretch reads ASTEEEATAL…EVAEVVVKKY (83 aa). An O-(pantetheine 4'-phosphoryl)serine modification is found at Ser-2501.

It depends on pantetheine 4'-phosphate as a cofactor.

The enzyme catalyses holo-[2-methylbutanoate polyketide synthase] + 2 malonyl-CoA + S-adenosyl-L-methionine + 2 NADPH + 3 H(+) = (S)-2-methylbutanoyl-[2-methylbutanoate polyketide synthase] + S-adenosyl-L-homocysteine + 2 CO2 + 2 NADP(+) + 2 CoA + H2O. It functions in the pathway polyketide biosynthesis; lovastatin biosynthesis. Its function is as follows. Diketide synthase; part of the gene cluster that mediates the biosynthesis of monakolin K, also known as lovastatin, and which acts as a potent competitive inhibitor of HMG-CoA reductase. Monakolin K biosynthesis is performed in two stages. The first stage is catalyzed by the nonaketide synthase mokA, which belongs to type I polyketide synthases and catalyzes the iterative nine-step formation of the polyketide. This PKS stage completed by the action of dehydrogenase mokE, which catalyzes the NADPH-dependent reduction of the unsaturated tetra-, penta- and heptaketide intermediates that arise during the mokA-mediated biosynthesis of the nonaketide chain and leads to dihydromonacolin L. Covalently bound dihydromonacolin L is released from mokA by the mokD esterase. Conversion of dihydromonacolin L into monacolin L and then monacolin J is subsequently performed with the participation of molecular oxygen and P450 monoogygenase mokC. Finally, mokF performs the conversion of monacoline J to monacoline K through the addition of the side-chain diketide moiety (2R)-2-methylbutanoate produced by the diketide synthase mokB. The protein is Lovastatin diketide synthase mokB of Monascus pilosus (Red mold).